Reading from the N-terminus, the 548-residue chain is Probable malate:quinone oxidoreductase (548 aa).

A disordered region spans residues 521–548 (DKPQAADSTPKPQLKPKPVQKEVADIAL). Residues 539–548 (VQKEVADIAL) show a composition bias toward basic and acidic residues.

It belongs to the MQO family. FAD is required as a cofactor.

The catalysed reaction is (S)-malate + a quinone = a quinol + oxaloacetate. It participates in carbohydrate metabolism; tricarboxylic acid cycle; oxaloacetate from (S)-malate (quinone route): step 1/1. This is Probable malate:quinone oxidoreductase from Escherichia coli (strain ATCC 8739 / DSM 1576 / NBRC 3972 / NCIMB 8545 / WDCM 00012 / Crooks).